We begin with the raw amino-acid sequence, 388 residues long: MGILGLSKLIADLAPQAIRESEIKNFFGRKVAIDASMCLYQFLIAVRSEGAQLATVNGDPTSHLMGMFYRTIRLLDNGIKPVYVFDGKPPDLKSGELAKRAERREEAEKALKAATEAGDEAEIEKFNRRLVRVTKEHAREAKELLKLMGVPYVDAPCEAEAQCAALVKAGKVYATATEDMDALTFGSSKLLRYLTYSEARKMPVKEFTYEKLLQGLELNQREFIDLCILLGCDYCESIKGIGPKRAIELINSYRDIETILDNLDTSKYTVPENWNYKVARELFIEPEVADASAIDLKWTEPDEEGLVKFLCGERQFSEERVRGGAKKLLKSKKAQTQVRLDSFFQTLPSSPNAVAAAKRKAEEAKKSANNKKAKIGGGGGAGRGRRPK.

Residues Met-1–Arg-104 form an N-domain region. Position 34 (Asp-34) interacts with Mg(2+). The DNA site is built by Arg-47 and Arg-70. Asp-86, Glu-158, Glu-160, Asp-179, and Asp-181 together coordinate Mg(2+). The tract at residues Glu-122–Tyr-253 is I-domain. Position 158 (Glu-158) interacts with DNA. Residues Gly-231 and Asp-233 each coordinate DNA. Residue Asp-233 participates in Mg(2+) binding. The interaction with PCNA stretch occupies residues Thr-336–Phe-344. Positions Ala-355–Lys-388 are disordered.

It belongs to the XPG/RAD2 endonuclease family. FEN1 subfamily. As to quaternary structure, interacts with PCNA. Three molecules of FEN1 bind to one PCNA trimer with each molecule binding to one PCNA monomer. PCNA stimulates the nuclease activity without altering cleavage specificity. Mg(2+) serves as cofactor. Phosphorylated. Phosphorylation upon DNA damage induces relocalization to the nuclear plasma.

The protein resides in the nucleus. It localises to the nucleolus. It is found in the nucleoplasm. The protein localises to the mitochondrion. Functionally, structure-specific nuclease with 5'-flap endonuclease and 5'-3' exonuclease activities involved in DNA replication and repair. During DNA replication, cleaves the 5'-overhanging flap structure that is generated by displacement synthesis when DNA polymerase encounters the 5'-end of a downstream Okazaki fragment. It enters the flap from the 5'-end and then tracks to cleave the flap base, leaving a nick for ligation. Also involved in the long patch base excision repair (LP-BER) pathway, by cleaving within the apurinic/apyrimidinic (AP) site-terminated flap. Acts as a genome stabilization factor that prevents flaps from equilibrating into structures that lead to duplications and deletions. Also possesses 5'-3' exonuclease activity on nicked or gapped double-stranded DNA, and exhibits RNase H activity. Also involved in replication and repair of rDNA and in repairing mitochondrial DNA. In Drosophila willistoni (Fruit fly), this protein is Flap endonuclease 1.